A 253-amino-acid chain; its full sequence is UPF0246 protein Swit_4565 (253 aa).

This sequence belongs to the UPF0246 family.

In Rhizorhabdus wittichii (strain DSM 6014 / CCUG 31198 / JCM 15750 / NBRC 105917 / EY 4224 / RW1) (Sphingomonas wittichii), this protein is UPF0246 protein Swit_4565.